The sequence spans 930 residues: uncharacterized protein (930 aa).

Positions 1-20 (MPSFVLWTFHLCSQWFQGLT) are cleaved as a signal peptide. N-linked (GlcNAc...) asparagine glycans are attached at residues N137, N146, N164, N210, N257, N628, N717, and N799.

The protein resides in the secreted. This is an uncharacterized protein from Arthroderma benhamiae (strain ATCC MYA-4681 / CBS 112371) (Trichophyton mentagrophytes).